A 187-amino-acid chain; its full sequence is Probable nicotinate-nucleotide adenylyltransferase (187 aa).

It belongs to the NadD family.

The enzyme catalyses nicotinate beta-D-ribonucleotide + ATP + H(+) = deamido-NAD(+) + diphosphate. It functions in the pathway cofactor biosynthesis; NAD(+) biosynthesis; deamido-NAD(+) from nicotinate D-ribonucleotide: step 1/1. Functionally, catalyzes the reversible adenylation of nicotinate mononucleotide (NaMN) to nicotinic acid adenine dinucleotide (NaAD). This is Probable nicotinate-nucleotide adenylyltransferase from Anaeromyxobacter dehalogenans (strain 2CP-C).